Consider the following 425-residue polypeptide: UPF0229 protein SG1344 (425 aa).

Residues 49-109 (GESVSIPNTD…GQGSVSQDGE (61 aa)) form a disordered region. A compositionally biased stretch (polar residues) spans 50–59 (ESVSIPNTDI). Positions 77–90 (PGNDHFVQNDRIER) are enriched in basic and acidic residues.

The protein belongs to the UPF0229 family.

This Sodalis glossinidius (strain morsitans) protein is UPF0229 protein SG1344.